Consider the following 161-residue polypeptide: Globin CTT-VIIB-3 (161 aa).

Residues methionine 1–alanine 16 form the signal peptide. One can recognise a Globin domain in the interval proline 18 to leucine 161. Residues histidine 76 and histidine 111 each contribute to the heme b site.

The protein belongs to the globin family. In terms of assembly, homodimer.

The protein is Globin CTT-VIIB-3 (CTT-7B3) of Chironomus thummi thummi (Midge).